Here is a 509-residue protein sequence, read N- to C-terminus: ATP synthase subunit beta (509 aa).

167–174 (GGAGVGKT) contributes to the ATP binding site. Positions 476–509 (ESLGAKMEDTSGDGAPAQSDSKSDSKGDDADKDA) are disordered. Positions 496-509 (SKSDSKGDDADKDA) are enriched in basic and acidic residues.

It belongs to the ATPase alpha/beta chains family. As to quaternary structure, F-type ATPases have 2 components, CF(1) - the catalytic core - and CF(0) - the membrane proton channel. CF(1) has five subunits: alpha(3), beta(3), gamma(1), delta(1), epsilon(1). CF(0) has three main subunits: a(1), b(2) and c(9-12). The alpha and beta chains form an alternating ring which encloses part of the gamma chain. CF(1) is attached to CF(0) by a central stalk formed by the gamma and epsilon chains, while a peripheral stalk is formed by the delta and b chains.

The protein localises to the cell membrane. The enzyme catalyses ATP + H2O + 4 H(+)(in) = ADP + phosphate + 5 H(+)(out). Its function is as follows. Produces ATP from ADP in the presence of a proton gradient across the membrane. The catalytic sites are hosted primarily by the beta subunits. This is ATP synthase subunit beta from Mycobacterium sp. (strain KMS).